A 347-amino-acid polypeptide reads, in one-letter code: Tetraacyldisaccharide 4'-kinase (347 aa).

64–71 (YVGGTGKT) lines the ATP pocket.

This sequence belongs to the LpxK family.

The enzyme catalyses a lipid A disaccharide + ATP = a lipid IVA + ADP + H(+). It functions in the pathway glycolipid biosynthesis; lipid IV(A) biosynthesis; lipid IV(A) from (3R)-3-hydroxytetradecanoyl-[acyl-carrier-protein] and UDP-N-acetyl-alpha-D-glucosamine: step 6/6. Its function is as follows. Transfers the gamma-phosphate of ATP to the 4'-position of a tetraacyldisaccharide 1-phosphate intermediate (termed DS-1-P) to form tetraacyldisaccharide 1,4'-bis-phosphate (lipid IVA). This chain is Tetraacyldisaccharide 4'-kinase, found in Bordetella bronchiseptica (strain ATCC BAA-588 / NCTC 13252 / RB50) (Alcaligenes bronchisepticus).